A 701-amino-acid polypeptide reads, in one-letter code: DNA ligase A (701 aa).

Positions 1–23 (MSEKATGEVEAELPEHPDADERR) are disordered. Residues 49-53 (DAEFD), 99-100 (SL), and E129 contribute to the NAD(+) site. Residue K131 is the N6-AMP-lysine intermediate of the active site. NAD(+)-binding residues include R152, E192, K308, and K332. Zn(2+) is bound by residues C426, C429, C445, and C451. The BRCT domain maps to 615-701 (SIERTLEGLS…EQGPPVEPAE (87 aa)).

The protein belongs to the NAD-dependent DNA ligase family. LigA subfamily. Requires Mg(2+) as cofactor. Mn(2+) is required as a cofactor.

It carries out the reaction NAD(+) + (deoxyribonucleotide)n-3'-hydroxyl + 5'-phospho-(deoxyribonucleotide)m = (deoxyribonucleotide)n+m + AMP + beta-nicotinamide D-nucleotide.. DNA ligase that catalyzes the formation of phosphodiester linkages between 5'-phosphoryl and 3'-hydroxyl groups in double-stranded DNA using NAD as a coenzyme and as the energy source for the reaction. It is essential for DNA replication and repair of damaged DNA. Probably the only ligase required for non-homologous end joining (NHEJ) repair of 3-overhangs. The polypeptide is DNA ligase A (Mycolicibacterium smegmatis (strain ATCC 700084 / mc(2)155) (Mycobacterium smegmatis)).